The primary structure comprises 160 residues: Transcription antitermination protein NusB (160 aa).

The protein belongs to the NusB family.

Involved in transcription antitermination. Required for transcription of ribosomal RNA (rRNA) genes. Binds specifically to the boxA antiterminator sequence of the ribosomal RNA (rrn) operons. The protein is Transcription antitermination protein NusB of Sinorhizobium fredii (strain NBRC 101917 / NGR234).